Consider the following 162-residue polypeptide: 6,7-dimethyl-8-ribityllumazine synthase (162 aa).

5-amino-6-(D-ribitylamino)uracil contacts are provided by residues phenylalanine 22, 56-58 (TFE), and 80-82 (AVI). 85 to 86 (GT) is a (2S)-2-hydroxy-3-oxobutyl phosphate binding site. The active-site Proton donor is the histidine 88. Position 113 (methionine 113) interacts with 5-amino-6-(D-ribitylamino)uracil. Arginine 127 serves as a coordination point for (2S)-2-hydroxy-3-oxobutyl phosphate.

It belongs to the DMRL synthase family.

It carries out the reaction (2S)-2-hydroxy-3-oxobutyl phosphate + 5-amino-6-(D-ribitylamino)uracil = 6,7-dimethyl-8-(1-D-ribityl)lumazine + phosphate + 2 H2O + H(+). It functions in the pathway cofactor biosynthesis; riboflavin biosynthesis; riboflavin from 2-hydroxy-3-oxobutyl phosphate and 5-amino-6-(D-ribitylamino)uracil: step 1/2. Catalyzes the formation of 6,7-dimethyl-8-ribityllumazine by condensation of 5-amino-6-(D-ribitylamino)uracil with 3,4-dihydroxy-2-butanone 4-phosphate. This is the penultimate step in the biosynthesis of riboflavin. The polypeptide is 6,7-dimethyl-8-ribityllumazine synthase (Anaeromyxobacter dehalogenans (strain 2CP-1 / ATCC BAA-258)).